Consider the following 20-residue polypeptide: Brevinin-1ITa (20 aa).

A Methionine sulfoxide; partial modification is found at methionine 8. An intrachain disulfide couples cysteine 14 to cysteine 20.

Belongs to the frog skin active peptide (FSAP) family. Brevinin subfamily. Expressed by the skin glands.

The protein resides in the secreted. Antimicrobial peptide active against Gram-positive bacterium S.epidermidis ATCC 12228 (MIC=4 uM), against Gram-negative bacterium E.coli ATCC 25922 (MIC=64 uM) and against yeast C.parapsilosis ATCC 22019 (MIC=16 uM). Has hemolytic and cytotoxic activity. The polypeptide is Brevinin-1ITa (Rana italica (Italian stream frog)).